The chain runs to 242 residues: Tryptophan synthase alpha chain (242 aa).

Catalysis depends on proton acceptor residues Glu-31 and Asp-42.

This sequence belongs to the TrpA family. In terms of assembly, tetramer of two alpha and two beta chains.

The enzyme catalyses (1S,2R)-1-C-(indol-3-yl)glycerol 3-phosphate + L-serine = D-glyceraldehyde 3-phosphate + L-tryptophan + H2O. It participates in amino-acid biosynthesis; L-tryptophan biosynthesis; L-tryptophan from chorismate: step 5/5. The alpha subunit is responsible for the aldol cleavage of indoleglycerol phosphate to indole and glyceraldehyde 3-phosphate. The sequence is that of Tryptophan synthase alpha chain from Staphylococcus aureus (strain USA300).